The chain runs to 118 residues: Holin-like protein CidA 2 (118 aa).

Transmembrane regions (helical) follow at residues 4-26, 33-52, 62-84, and 91-113; these read VTLL…IQGV, GSLI…VLPL, LIVF…GSFL, and IFLL…SQLL.

This sequence belongs to the CidA/LrgA family. CidA subfamily.

It is found in the cell membrane. Its function is as follows. Increases the activity of extracellular murein hydrolases possibly by mediating their export via hole formation. Inhibited by the antiholin-like proteins LrgAB. In an unstressed cell, the LrgAB products probably inhibit the function of the CidA protein. When a cell is stressed by the addition of antibiotics or by other factors in the environment, CidA possibly oligomerizes within the bacterial cell membrane, creating lesions that disrupt the proton motive force, which in turn results in loss of cell viability. These lesions are also hypothesized to regulate the subsequent cell lysis by either allowing the murein hydrolases access to the cell wall substrate and/or regulating their activity by a possible change in the cell wall pH that results from loss of membrane potential. The chain is Holin-like protein CidA 2 (cidA2) from Bacillus cereus (strain ATCC 14579 / DSM 31 / CCUG 7414 / JCM 2152 / NBRC 15305 / NCIMB 9373 / NCTC 2599 / NRRL B-3711).